Consider the following 134-residue polypeptide: Small ribosomal subunit protein uS8c (134 aa).

The protein belongs to the universal ribosomal protein uS8 family. As to quaternary structure, part of the 30S ribosomal subunit.

The protein resides in the plastid. It is found in the chloroplast. Its function is as follows. One of the primary rRNA binding proteins, it binds directly to 16S rRNA central domain where it helps coordinate assembly of the platform of the 30S subunit. The protein is Small ribosomal subunit protein uS8c (rps8) of Arabis hirsuta (Hairy rock-cress).